We begin with the raw amino-acid sequence, 103 residues long: Large ribosomal subunit protein uL24 (103 aa).

This sequence belongs to the universal ribosomal protein uL24 family. In terms of assembly, part of the 50S ribosomal subunit.

In terms of biological role, one of two assembly initiator proteins, it binds directly to the 5'-end of the 23S rRNA, where it nucleates assembly of the 50S subunit. One of the proteins that surrounds the polypeptide exit tunnel on the outside of the subunit. The protein is Large ribosomal subunit protein uL24 of Vesicomyosocius okutanii subsp. Calyptogena okutanii (strain HA).